The sequence spans 414 residues: MAKTTKVKGNKKEVKASKQAKEEKAKAVSSSSSESSSSSSSSSESESESESESESSSSSSSSDSESSSSSSSDSESEAETKKEESKDSSSSSSDSSSDEEEEEEKEETKKEESKESSSSDSSSSSSSDSESEKEESNDKKRKSEDAEEEEDEESSNKKQKNEETEEPATIFVGRLSWSIDDEWLKKEFEHIGGVIGARVIYERGTDRSRGYGYVDFENKSYAEKAIQEMQGKEIDGRPINCDMSTSKPAGNNDRAKKFGDTPSEPSDTLFLGNLSFNADRDAIFELFAKHGEVVSVRIPTHPETEQPKGFGYVQFSNMEDAKKALDALQGEYIDNRPVRLDFSSPRPNNDGGRGGSRGFGGRGGGRGGNRGFGGRGGARGGRGGFRPSGSGANTAPLGRSRNTASFAGSKKTFD.

Disordered stretches follow at residues 1 to 172, 244 to 264, and 336 to 414; these read MAKT…TIFV, STSK…TPSE, and RPVR…KTFD. The segment covering 10-26 has biased composition (basic and acidic residues); it reads NKKEVKASKQAKEEKAK. 2 stretches are compositionally biased toward low complexity: residues 27 to 44 and 54 to 73; these read AVSS…SSSE and ESSS…SSSD. A compositionally biased stretch (basic and acidic residues) spans 78–87; sequence AETKKEESKD. Ser93, Ser95, Ser96, Ser97, Ser116, Ser127, Ser129, Ser131, and Ser143 each carry phosphoserine. Residues 96-105 are compositionally biased toward acidic residues; that stretch reads SSDEEEEEEK. Residues 106–117 are compositionally biased toward basic and acidic residues; sequence EETKKEESKESS. The segment covering 118–128 has biased composition (low complexity); sequence SSDSSSSSSSD. Positions 134–144 are enriched in basic and acidic residues; it reads EESNDKKRKSE. RRM domains follow at residues 168-246 and 267-345; these read ATIF…MSTS and DTLF…FSSP. Residues 351–386 are compositionally biased toward gly residues; it reads GGRGGSRGFGGRGGGRGGNRGFGGRGGARGGRGGFR. The residue at position 353 (Arg353) is an Omega-N-methylarginine. Residues 353 to 384 are RGG-box; it reads RGGSRGFGGRGGGRGGNRGFGGRGGARGGRGG. Asymmetric dimethylarginine; by HMT1; alternate is present on residues Arg357, Arg362, and Arg366. 3 positions are modified to omega-N-methylarginine; by HMT1; alternate: Arg357, Arg362, and Arg366. Residues 366–384 form an RNA-binding RGG-box region; it reads RGGNRGFGGRGGARGGRGG. Position 370 is an omega-N-methylarginine (Arg370). An asymmetric dimethylarginine; by HMT1; alternate mark is found at Arg375, Arg379, and Arg382. 3 positions are modified to omega-N-methylarginine; by HMT1; alternate: Arg375, Arg379, and Arg382. At Arg386 the chain carries Omega-N-methylarginine.

The protein belongs to the RRM GAR family. In terms of processing, methylated by HMT1, forming asymmetric dimethylarginines (DMA) within a domain referred to as an RGG box, made up of repeated Gly-Gly dipeptides interspersed with Arg and aromatic residues. Post-translationally, pyrophosphorylated by 5-diphosphoinositol pentakisphosphate (5-IP7). Serine pyrophosphorylation is achieved by Mg(2+)-dependent, but enzyme independent transfer of a beta-phosphate from a inositol pyrophosphate to a pre-phosphorylated serine residue.

The protein localises to the nucleus. It localises to the nucleolus. Functionally, involved in pre-rRNA processing. Specifically binds nuclear localization sequences. Candidate for a receptor at the nucleus that may be involved in both RNA and protein transport. Binds telomeric sequences of the type (TG[1-3])n in vitro. This Saccharomyces cerevisiae (strain ATCC 204508 / S288c) (Baker's yeast) protein is Nuclear localization sequence-binding protein.